The chain runs to 528 residues: ADP,ATP carrier protein 1 (528 aa).

Transmembrane regions (helical) follow at residues 24 to 44 (LKKV…YTIL), 63 to 83 (IPFI…LIYA), 93 to 113 (ALFF…PVVI), 124 to 144 (AFAD…IAML), 149 to 169 (FAVF…LMFW), 184 to 204 (FYAL…PAII), 220 to 240 (WGVS…IIAA), 284 to 304 (YMLL…LVEV), 327 to 347 (FSFW…GNVI), 356 to 376 (ALVT…LVIF), 381 to 401 (TGLV…VGAI), and 463 to 483 (IGAM…VWLT).

This sequence belongs to the ADP/ATP translocase tlc family.

It localises to the cell membrane. In Chlamydia trachomatis serovar D (strain ATCC VR-885 / DSM 19411 / UW-3/Cx), this protein is ADP,ATP carrier protein 1 (tlcA).